The following is a 1076-amino-acid chain: Cytadherence high molecular weight protein 3 (1076 aa).

The segment at 264–284 is fibronectin-binding; the sequence is QGYDQGYDQQYDQQGYDQQGY. Positions 326–335 are enriched in low complexity; it reads QQPVEVAKPA. Positions 326 to 351 are disordered; the sequence is QQPVEVAKPAPTKPVGPKPQPGKKAT. Residues 336 to 345 are compositionally biased toward pro residues; the sequence is PTKPVGPKPQ. The stretch at 562 to 616 forms a coiled coil; that stretch reads EITKLEELVEIKTDNTESLNKLETLIDENKKIIDQFKQLKEEAKKSNSNINLEKV. Disordered regions lie at residues 789-808 and 850-873; these read SREHEQVQPKAQHQQPTTRI and RINPQDSYYDQGYEQPDPYQEQQP. Positions 797-806 are enriched in polar residues; it reads PKAQHQQPTT. Residues 862 to 873 show a composition bias toward low complexity; the sequence is YEQPDPYQEQQP.

Its subcellular location is the cell projection. It is found in the attachment organelle membrane. Functionally, binds immobilized fibronectin. In terms of biological role, component of the cytoskeleton-like structure which stabilizes the shape of the wall-less mycoplasma. This cytoskeleton-like network of accessory proteins containing HMW proteins 1 to 5 allows the proper anchoring of cytadhesin proteins in the mycoplasmal membrane at the attachment organelle. Essential for successful surface parasitism. This chain is Cytadherence high molecular weight protein 3 (hlp3), found in Mycoplasmoides gallisepticum (strain R(low / passage 15 / clone 2)) (Mycoplasma gallisepticum).